Here is a 361-residue protein sequence, read N- to C-terminus: Carbon monoxide-induced hydrogenase (361 aa).

Residues cysteine 64, cysteine 67, cysteine 355, and cysteine 358 each coordinate Ni(2+).

This sequence to E.coli formate hydrogenlyase hydrogenase isozyme 3 and to bovine mitochondrial NADH-ubiquinone oxidoreductase. Requires Ni(2+) as cofactor.

Functionally, the carbon monoxide dehydrogenase (CODH) oxidizes carbon monoxide coupled, via CooF, to the reduction of a hydrogen cation by a hydrogenase (probably CooH). The polypeptide is Carbon monoxide-induced hydrogenase (cooH) (Rhodospirillum rubrum).